A 497-amino-acid chain; its full sequence is Cytochrome P450 2D19 (497 aa).

Cysteine 443 serves as a coordination point for heme.

The protein belongs to the cytochrome P450 family. The cofactor is heme.

Its subcellular location is the endoplasmic reticulum membrane. The protein localises to the microsome membrane. The catalysed reaction is an organic molecule + reduced [NADPH--hemoprotein reductase] + O2 = an alcohol + oxidized [NADPH--hemoprotein reductase] + H2O + H(+). In terms of biological role, responsible for the metabolism of many drugs and environmental chemicals that it oxidizes. This Callithrix jacchus (White-tufted-ear marmoset) protein is Cytochrome P450 2D19 (CYP2D19).